The chain runs to 642 residues: Threonine--tRNA ligase (642 aa).

Residues 239 to 530 (DHRKLGKELN…LTEHYAGAFP (292 aa)) form a catalytic region. Zn(2+) is bound by residues Cys-331, His-382, and His-507.

This sequence belongs to the class-II aminoacyl-tRNA synthetase family. In terms of assembly, homodimer. The cofactor is Zn(2+).

Its subcellular location is the cytoplasm. The catalysed reaction is tRNA(Thr) + L-threonine + ATP = L-threonyl-tRNA(Thr) + AMP + diphosphate + H(+). In terms of biological role, catalyzes the attachment of threonine to tRNA(Thr) in a two-step reaction: L-threonine is first activated by ATP to form Thr-AMP and then transferred to the acceptor end of tRNA(Thr). Also edits incorrectly charged L-seryl-tRNA(Thr). The chain is Threonine--tRNA ligase from Lawsonia intracellularis (strain PHE/MN1-00).